The primary structure comprises 31 residues: Acetyl-CoA carboxylase (31 aa).

The disordered stretch occupies residues 1 to 31; that stretch reads RISSSVIAHKTQLDSGKREVYSSHMQLGGPK. The span at 11 to 21 shows a compositional bias: basic and acidic residues; it reads TQLDSGKREVY.

It carries out the reaction hydrogencarbonate + acetyl-CoA + ATP = malonyl-CoA + ADP + phosphate + H(+). It functions in the pathway lipid metabolism; malonyl-CoA biosynthesis; malonyl-CoA from acetyl-CoA: step 1/1. In Catharanthus roseus (Madagascar periwinkle), this protein is Acetyl-CoA carboxylase.